Reading from the N-terminus, the 147-residue chain is Thyrotropin subunit beta (147 aa).

The signal sequence occupies residues 1–20; sequence MRVVLLASGVLCLLAGQVLS. 6 disulfide bridges follow: C22-C72, C36-C87, C39-C126, C47-C103, C51-C105, and C108-C115. A glycan (N-linked (GlcNAc...) asparagine) is linked at N43.

It belongs to the glycoprotein hormones subunit beta family. As to quaternary structure, heterodimer of a common alpha chain and a unique beta chain which confers biological specificity to thyrotropin, lutropin, follitropin and gonadotropin.

The protein localises to the secreted. In terms of biological role, indispensable for the control of thyroid structure and metabolism. May play some role in the biological processes of the immature fishes. This chain is Thyrotropin subunit beta (tshb), found in Anguilla japonica (Japanese eel).